The chain runs to 297 residues: Protoheme IX farnesyltransferase (297 aa).

The next 9 helical transmembrane spans lie at 23–43 (VTQLAVFCAIIGMFLAVPGLP), 49–69 (VFGTLGIWLLAAAAFAINCLI), 90–110 (ISAAQVISLSGLLGGAGMLVL), 117–137 (LTMWLTFATFVGYAIIYTVIL), 144–164 (NIVIGGLSGAMPPALGWAAVA), 171–191 (AWVLVLIIFIWTPPHFWALAL), 215–235 (RLHILLYSLALVATTTLPYII), 238–258 (SGLLYLASALALGGMFVAYAW), and 277–297 (ILYLALLFAALLMDHWAGLLA).

It belongs to the UbiA prenyltransferase family. Protoheme IX farnesyltransferase subfamily.

The protein resides in the cell inner membrane. The enzyme catalyses heme b + (2E,6E)-farnesyl diphosphate + H2O = Fe(II)-heme o + diphosphate. It functions in the pathway porphyrin-containing compound metabolism; heme O biosynthesis; heme O from protoheme: step 1/1. Converts heme B (protoheme IX) to heme O by substitution of the vinyl group on carbon 2 of heme B porphyrin ring with a hydroxyethyl farnesyl side group. This is Protoheme IX farnesyltransferase from Bordetella petrii (strain ATCC BAA-461 / DSM 12804 / CCUG 43448).